Here is a 195-residue protein sequence, read N- to C-terminus: Interferon omega-1 (195 aa).

The or 23 in some molecules signal peptide spans 1 to 21 (MALLFPLLAALVMTSYSPVGS). 2 disulfides stabilise this stretch: Cys-24-Cys-122 and Cys-52-Cys-162. Asn-101 carries an N-linked (GlcNAc...) asparagine glycan.

The protein belongs to the alpha/beta interferon family.

The protein resides in the secreted. The chain is Interferon omega-1 (IFNW1) from Homo sapiens (Human).